Reading from the N-terminus, the 655-residue chain is p-hydroxybenzoic acid efflux pump subunit AaeB (655 aa).

Topologically, residues M1–R12 are periplasmic. A helical membrane pass occupies residues F13–L33. Residues E34–R37 lie on the Cytoplasmic side of the membrane. Residues W38 to P58 form a helical membrane-spanning segment. The Periplasmic segment spans residues Y59 to F68. A helical transmembrane segment spans residues L69–I89. Residues R90 to P92 lie on the Cytoplasmic side of the membrane. The chain crosses the membrane as a helical span at residues L93–V113. Residues R114–A120 lie on the Periplasmic side of the membrane. Residues W121–L141 form a helical membrane-spanning segment. At T142–S151 the chain is on the cytoplasmic side. Residues E152–I172 form a helical membrane-spanning segment. Topologically, residues K173–T369 are periplasmic. A helical membrane pass occupies residues L370 to V390. At T391 to D406 the chain is on the cytoplasmic side. The helical transmembrane segment at F407–P427 threads the bilayer. Residues N428–Q430 are Periplasmic-facing. A helical membrane pass occupies residues Q431–V451. The Cytoplasmic segment spans residues Q452 to S458. Residues M459–F479 form a helical membrane-spanning segment. The Periplasmic portion of the chain corresponds to S480–Q481. Residues F482–L502 traverse the membrane as a helical segment. At V503–S655 the chain is on the cytoplasmic side.

It belongs to the aromatic acid exporter ArAE (TC 2.A.85) family.

The protein resides in the cell inner membrane. Functionally, forms an efflux pump with AaeA. Could function as a metabolic relief valve, allowing to eliminate certain compounds when they accumulate to high levels in the cell. In Escherichia coli O157:H7, this protein is p-hydroxybenzoic acid efflux pump subunit AaeB.